Reading from the N-terminus, the 137-residue chain is Small ribosomal subunit protein uS11 (137 aa).

The interval 1 to 25 is disordered; it reads MADRRRGAARGGAARPRRRERKNIP. Basic residues predominate over residues 15 to 25; it reads RPRRRERKNIP.

The protein belongs to the universal ribosomal protein uS11 family. As to quaternary structure, part of the 30S ribosomal subunit. Interacts with proteins S7 and S18. Binds to IF-3.

Located on the platform of the 30S subunit, it bridges several disparate RNA helices of the 16S rRNA. Forms part of the Shine-Dalgarno cleft in the 70S ribosome. The chain is Small ribosomal subunit protein uS11 from Thermomicrobium roseum (strain ATCC 27502 / DSM 5159 / P-2).